We begin with the raw amino-acid sequence, 459 residues long: Exodeoxyribonuclease 7 large subunit (459 aa).

The protein belongs to the XseA family. In terms of assembly, heterooligomer composed of large and small subunits.

Its subcellular location is the cytoplasm. The enzyme catalyses Exonucleolytic cleavage in either 5'- to 3'- or 3'- to 5'-direction to yield nucleoside 5'-phosphates.. Its function is as follows. Bidirectionally degrades single-stranded DNA into large acid-insoluble oligonucleotides, which are then degraded further into small acid-soluble oligonucleotides. This chain is Exodeoxyribonuclease 7 large subunit, found in Pseudomonas aeruginosa (strain ATCC 15692 / DSM 22644 / CIP 104116 / JCM 14847 / LMG 12228 / 1C / PRS 101 / PAO1).